The sequence spans 239 residues: tRNA (guanine-N(7)-)-methyltransferase (239 aa).

Positions 69, 94, 121, and 144 each coordinate S-adenosyl-L-methionine. Asp144 is a catalytic residue. A substrate-binding site is contributed by Lys148. An interaction with RNA region spans residues 150–155 (RHNKRR). Residues Asp180 and 217–220 (TKFE) contribute to the substrate site.

The protein belongs to the class I-like SAM-binding methyltransferase superfamily. TrmB family. In terms of assembly, monomer.

The enzyme catalyses guanosine(46) in tRNA + S-adenosyl-L-methionine = N(7)-methylguanosine(46) in tRNA + S-adenosyl-L-homocysteine. It functions in the pathway tRNA modification; N(7)-methylguanine-tRNA biosynthesis. Catalyzes the formation of N(7)-methylguanine at position 46 (m7G46) in tRNA. This Escherichia coli O6:H1 (strain CFT073 / ATCC 700928 / UPEC) protein is tRNA (guanine-N(7)-)-methyltransferase.